The primary structure comprises 194 residues: Protein GrpE (194 aa).

The segment covering methionine 1–proline 13 has biased composition (polar residues). The segment at methionine 1–leucine 50 is disordered. The segment covering arginine 21–leucine 50 has biased composition (low complexity).

It belongs to the GrpE family. Homodimer.

Its subcellular location is the cytoplasm. Functionally, participates actively in the response to hyperosmotic and heat shock by preventing the aggregation of stress-denatured proteins, in association with DnaK and GrpE. It is the nucleotide exchange factor for DnaK and may function as a thermosensor. Unfolded proteins bind initially to DnaJ; upon interaction with the DnaJ-bound protein, DnaK hydrolyzes its bound ATP, resulting in the formation of a stable complex. GrpE releases ADP from DnaK; ATP binding to DnaK triggers the release of the substrate protein, thus completing the reaction cycle. Several rounds of ATP-dependent interactions between DnaJ, DnaK and GrpE are required for fully efficient folding. The sequence is that of Protein GrpE from Paraburkholderia xenovorans (strain LB400).